Consider the following 393-residue polypeptide: NAD(P)H-quinone oxidoreductase subunit H, chloroplastic (393 aa).

The protein belongs to the complex I 49 kDa subunit family. NDH is composed of at least 16 different subunits, 5 of which are encoded in the nucleus.

The protein localises to the plastid. It is found in the chloroplast thylakoid membrane. It carries out the reaction a plastoquinone + NADH + (n+1) H(+)(in) = a plastoquinol + NAD(+) + n H(+)(out). The catalysed reaction is a plastoquinone + NADPH + (n+1) H(+)(in) = a plastoquinol + NADP(+) + n H(+)(out). In terms of biological role, NDH shuttles electrons from NAD(P)H:plastoquinone, via FMN and iron-sulfur (Fe-S) centers, to quinones in the photosynthetic chain and possibly in a chloroplast respiratory chain. The immediate electron acceptor for the enzyme in this species is believed to be plastoquinone. Couples the redox reaction to proton translocation, and thus conserves the redox energy in a proton gradient. The chain is NAD(P)H-quinone oxidoreductase subunit H, chloroplastic from Arabis hirsuta (Hairy rock-cress).